Consider the following 92-residue polypeptide: C-C motif chemokine 3 (92 aa).

A signal peptide spans 1–19 (MKVPGAALAVLLCTMSLCS). Intrachain disulfides connect cysteine 33/cysteine 57 and cysteine 34/cysteine 73.

It belongs to the intercrine beta (chemokine CC) family. As to quaternary structure, self-associates. Also heterodimer of MIP-1-alpha(4-69) and MIP-1-beta(3-69). Interacts with CCR1.

It localises to the secreted. Monokine with inflammatory and chemokinetic properties. Binds to CCR1, CCR4 and CCR5. One of the major HIV-suppressive factors produced by CD8+ T-cells. Recombinant MIP-1-alpha induces a dose-dependent inhibition of different strains of HIV-1, HIV-2, and simian immunodeficiency virus (SIV). This chain is C-C motif chemokine 3 (CCL3), found in Canis lupus familiaris (Dog).